The following is a 103-amino-acid chain: Large ribosomal subunit protein bL21 (103 aa).

It belongs to the bacterial ribosomal protein bL21 family. Part of the 50S ribosomal subunit. Contacts protein L20.

Functionally, this protein binds to 23S rRNA in the presence of protein L20. The protein is Large ribosomal subunit protein bL21 of Borreliella burgdorferi (strain ZS7) (Borrelia burgdorferi).